The following is a 1052-amino-acid chain: Kinesin-like protein KIF11 (1052 aa).

The Kinesin motor domain occupies Asn-17 to Ile-358. Gly-104 to Thr-111 lines the ATP pocket. An N6-acetyllysine modification is found at Lys-145. The stretch at Val-364–Glu-478 forms a coiled coil. A Phosphothreonine modification is found at Thr-457. A Glycyl lysine isopeptide (Lys-Gly) (interchain with G-Cter in SUMO2) cross-link involves residue Lys-476. Thr-925 bears the Phosphothreonine mark. 2 disordered regions span residues Leu-950–Val-1026 and Glu-1033–Leu-1052. Residues Glu-963–Ser-988 adopt a coiled-coil conformation. Residues Lys-1016–Val-1026 show a composition bias toward basic and acidic residues.

The protein belongs to the TRAFAC class myosin-kinesin ATPase superfamily. Kinesin family. BimC subfamily. Interacts with the thyroid hormone receptor in the presence of thyroid hormone. Component of a large chromatin remodeling complex, at least composed of MYSM1, PCAF, RBM10 and KIF11/TRIP5. Interacts with RARRES1 and AGBL2. Phosphorylated exclusively on serine during S phase, but on both serine and Thr-925 during mitosis, so controlling the association of KIF11 with the spindle apparatus (probably during early prophase).

It localises to the cytoplasm. Its subcellular location is the cytoskeleton. The protein localises to the spindle pole. In terms of biological role, motor protein required for establishing a bipolar spindle during mitosis. Required in non-mitotic cells for transport of secretory proteins from the Golgi complex to the cell surface. The chain is Kinesin-like protein KIF11 (Kif11) from Mus musculus (Mouse).